Here is a 431-residue protein sequence, read N- to C-terminus: Salivary plasminogen activator beta (431 aa).

A signal peptide spans 1–36; the sequence is MVNTMKTKLLCVLLLCGAVFSLPRQETYRQLARGSR. Positions 37-75 constitute an EGF-like domain; sequence AYGGCSELRCFNGGTCWQAASFSDFVCQCPKGYTGKQCE. Cystine bridges form between C41/C52, C46/C63, C65/C74, C82/C163, C103/C145, C134/C158, C168/C299, C211/C227, C219/C288, C313/C388, C345/C361, and C378/C406. In terms of domain architecture, Kringle spans 82–163; it reads CYKDQGVTYR…ILEFCSVPVC (82 aa). N139 carries N-linked (GlcNAc...) asparagine glycosylation. Residues 180–430 enclose the Peptidase S1 domain; the sequence is STGGLFTDIT…YLGWIRDNMR (251 aa). Catalysis depends on charge relay system residues H226 and D275. A glycan (N-linked (GlcNAc...) asparagine) is linked at N352. S382 functions as the Charge relay system in the catalytic mechanism.

It belongs to the peptidase S1 family. As to quaternary structure, monomer.

Its subcellular location is the secreted. The catalysed reaction is Specific cleavage of Arg-|-Val bond in plasminogen to form plasmin.. In terms of biological role, probably essential to support the feeding habits of this exclusively haematophagous animal. Probable potent thrombolytic agent. This Desmodus rotundus (Vampire bat) protein is Salivary plasminogen activator beta.